A 206-amino-acid polypeptide reads, in one-letter code: Pyridoxine/pyridoxamine 5'-phosphate oxidase (206 aa).

FMN-binding positions include 53–58 (RMVLLK), 68–69 (YT), lysine 75, and glutamine 97. Residue lysine 58 coordinates substrate. Positions 115, 119, and 123 each coordinate substrate. FMN is bound by residues 132-133 (QS) and tryptophan 177. A substrate-binding site is contributed by 183–185 (RLH). Arginine 187 lines the FMN pocket.

Belongs to the pyridoxamine 5'-phosphate oxidase family. Homodimer. The cofactor is FMN.

The catalysed reaction is pyridoxamine 5'-phosphate + O2 + H2O = pyridoxal 5'-phosphate + H2O2 + NH4(+). The enzyme catalyses pyridoxine 5'-phosphate + O2 = pyridoxal 5'-phosphate + H2O2. The protein operates within cofactor metabolism; pyridoxal 5'-phosphate salvage; pyridoxal 5'-phosphate from pyridoxamine 5'-phosphate: step 1/1. Its pathway is cofactor metabolism; pyridoxal 5'-phosphate salvage; pyridoxal 5'-phosphate from pyridoxine 5'-phosphate: step 1/1. Catalyzes the oxidation of either pyridoxine 5'-phosphate (PNP) or pyridoxamine 5'-phosphate (PMP) into pyridoxal 5'-phosphate (PLP). This Sinorhizobium fredii (strain NBRC 101917 / NGR234) protein is Pyridoxine/pyridoxamine 5'-phosphate oxidase.